The primary structure comprises 309 residues: Homoserine O-succinyltransferase (309 aa).

The Acyl-thioester intermediate role is filled by C142. Substrate contacts are provided by K163 and S192. The active-site Proton acceptor is H235. E237 is a catalytic residue. R249 is a substrate binding site.

This sequence belongs to the MetA family. In terms of assembly, homodimer.

The protein resides in the cytoplasm. It catalyses the reaction L-homoserine + succinyl-CoA = O-succinyl-L-homoserine + CoA. The protein operates within amino-acid biosynthesis; L-methionine biosynthesis via de novo pathway; O-succinyl-L-homoserine from L-homoserine: step 1/1. Functionally, transfers a succinyl group from succinyl-CoA to L-homoserine, forming succinyl-L-homoserine. This Salmonella gallinarum (strain 287/91 / NCTC 13346) protein is Homoserine O-succinyltransferase.